The chain runs to 200 residues: Regulator of G-protein signaling 16 (200 aa).

Residues C2 and C12 are each lipidated (S-palmitoyl cysteine). In terms of domain architecture, RGS spans 65 to 181; it reads SFDLLLSSKN…LKSPAYRDLA (117 aa). 2 positions are modified to phosphotyrosine: Y168 and Y177.

As to quaternary structure, interacts with GNAI1 and GNAQ. Interacts with GNAI3, GNAI3 and GNAO1. (Microbial infection) Interacts with porcine circovirus 2 ORF3 protein. Palmitoylated on Cys-2 and/or Cys-12. In terms of processing, phosphorylated. Phosphorylation at Tyr-168 by EGFR enhances GTPase accelerating (GAP) activity toward GNAI1.

It is found in the membrane. Functionally, regulates G protein-coupled receptor signaling cascades. Inhibits signal transduction by increasing the GTPase activity of G protein alpha subunits, thereby driving them into their inactive GDP-bound form. Plays an important role in the phototransduction cascade by regulating the lifetime and effective concentration of activated transducin alpha. May regulate extra and intracellular mitogenic signals. In terms of biological role, (Microbial infection) Gets inactivated and/or degraded by porcine circovirus 2 ORF3 protein, leading to enhanced expression of IL-6 and IL-8 in infected lymphocytes. This would explain chronic inflammatory response of PCV2 infected pigs. The sequence is that of Regulator of G-protein signaling 16 (RGS16) from Sus scrofa (Pig).